The following is a 384-amino-acid chain: Cyclohexane-1-carbonyl-CoA dehydrogenase (384 aa).

This sequence belongs to the acyl-CoA dehydrogenase family. Homotetramer. FAD is required as a cofactor.

It carries out the reaction cyclohexane-1-carbonyl-CoA + oxidized [electron-transfer flavoprotein] + H(+) = cyclohex-1-ene-1-carbonyl-CoA + reduced [electron-transfer flavoprotein]. Functionally, mediates the conversion of cyclohexane-1-carbonyl-CoA (ChCoA) into cyclohex-1-ene-1-carbonyl-CoA in biosynthesis of cyclohexane-1-carboxylate, a by-product produced during fermentation of benzoate and crotonate to acetate. This is Cyclohexane-1-carbonyl-CoA dehydrogenase from Syntrophus aciditrophicus (strain SB).